Consider the following 469-residue polypeptide: Ribonuclease Y (469 aa).

The helical transmembrane segment at valine 6–isoleucine 26 threads the bilayer. The region spanning phenylalanine 149–methionine 209 is the KH domain. The 94-residue stretch at valine 276–serine 369 folds into the HD domain.

This sequence belongs to the RNase Y family.

Its subcellular location is the cell membrane. Its function is as follows. Endoribonuclease that initiates mRNA decay. In Malacoplasma penetrans (strain HF-2) (Mycoplasma penetrans), this protein is Ribonuclease Y.